The chain runs to 357 residues: Retinoic acid-induced protein 3 (357 aa).

Residues 1–33 (MATTVPDGCRNGLKSKYYRLCDKAEAWGIVLET) lie on the Extracellular side of the membrane. Residues 34–54 (VATAGVVTSVAFMLTLPILVC) form a helical membrane-spanning segment. At 55–68 (KVQDSNRRKMLPTQ) the chain is on the cytoplasmic side. A helical transmembrane segment spans residues 69–89 (FLFLLGVLGIFGLTFAFIIGL). Residues 90 to 97 (DGSTGPTR) lie on the Extracellular side of the membrane. The helical transmembrane segment at 98–118 (FFLFGILFSICFSCLLAHAVS) threads the bilayer. Over 119-129 (LTKLVRGRKPL) the chain is Cytoplasmic. A helical membrane pass occupies residues 130–150 (SLLVILGLAVGFSLVQDVIAI). The Extracellular portion of the chain corresponds to 151–176 (EYIVLTMNRTNVNVFSELSAPRRNED). N-linked (GlcNAc...) asparagine glycosylation is present at N158. The helical transmembrane segment at 177–197 (FVLLLTYVLFLMALTFLMSSF) threads the bilayer. Residues 198–212 (TFCGSFTGWKRHGAH) lie on the Cytoplasmic side of the membrane. The chain crosses the membrane as a helical span at residues 213 to 233 (IYLTMLLSIAIWVAWITLLML). At 234–247 (PDFDRRWDDTILSS) the chain is on the extracellular side. The chain crosses the membrane as a helical span at residues 248 to 268 (ALAANGWVFLLAYVSPEFWLL). At 269–357 (TKQRNPMDYP…KDYEVKKEGS (89 aa)) the chain is on the cytoplasmic side. S301 is subject to Phosphoserine. Phosphotyrosine is present on residues Y317 and Y320. S345 is subject to Phosphoserine. Phosphotyrosine is present on residues Y347 and Y350.

It belongs to the G-protein coupled receptor 3 family. As to quaternary structure, interacts (via its transmembrane domain) with EGFR. Post-translationally, phosphorylated in two conserved double-tyrosine motifs, Tyr-317/Tyr-320 and Tyr-347/Tyr-350, by EGFR; leading to inactivation of the tumor suppressive function of GPRC5A in lung cancer cells. Tyr-317 and Tyr-320 are the preferred residues responsible for EGFR-mediated GPRC5A phosphorylation. Expressed at high level in fetal and adult lung tissues but repressed in most human lung cancers. Constitutively expressed in fetal kidney and adult placenta, kidney, prostate, testis, ovary, small intestine, colon, stomach, and spinal cord at low to moderate levels. Not detectable in fetal heart, brain, and liver and adult heart, brain, liver, skeletal muscle, pancreas, spleen, thymus, and peripheral leukocytes. According to PubMed:10783259, expressed at low but detectable level in pancreas and heart.

It localises to the cell membrane. The protein localises to the cytoplasmic vesicle membrane. In terms of biological role, orphan receptor. Could be involved in modulating differentiation and maintaining homeostasis of epithelial cells. This retinoic acid-inducible GPCR provide evidence for a possible interaction between retinoid and G-protein signaling pathways. Functions as a negative modulator of EGFR signaling. May act as a lung tumor suppressor. The protein is Retinoic acid-induced protein 3 (GPRC5A) of Homo sapiens (Human).